A 508-amino-acid chain; its full sequence is Bifunctional purine biosynthesis protein PurH (508 aa).

An MGS-like domain is found at Met1–Val144.

The protein belongs to the PurH family.

The enzyme catalyses (6R)-10-formyltetrahydrofolate + 5-amino-1-(5-phospho-beta-D-ribosyl)imidazole-4-carboxamide = 5-formamido-1-(5-phospho-D-ribosyl)imidazole-4-carboxamide + (6S)-5,6,7,8-tetrahydrofolate. It carries out the reaction IMP + H2O = 5-formamido-1-(5-phospho-D-ribosyl)imidazole-4-carboxamide. It participates in purine metabolism; IMP biosynthesis via de novo pathway; 5-formamido-1-(5-phospho-D-ribosyl)imidazole-4-carboxamide from 5-amino-1-(5-phospho-D-ribosyl)imidazole-4-carboxamide (10-formyl THF route): step 1/1. It functions in the pathway purine metabolism; IMP biosynthesis via de novo pathway; IMP from 5-formamido-1-(5-phospho-D-ribosyl)imidazole-4-carboxamide: step 1/1. The polypeptide is Bifunctional purine biosynthesis protein PurH (Leuconostoc citreum (strain KM20)).